The following is a 331-amino-acid chain: UDP-GalNAc:beta-1,3-N-acetylgalactosaminyltransferase 1 (331 aa).

Residues 1–20 are Cytoplasmic-facing; the sequence is MAPALPITLPSKMSLRSLKW. A helical; Signal-anchor for type II membrane protein membrane pass occupies residues 21–43; the sequence is SLLLLSLLSFLVMWYLSLPHYNV. Topologically, residues 44-331 are lumenal; sequence IERVNWMYFY…VMLRNTTCHY (288 aa). N-linked (GlcNAc...) asparagine glycosylation is found at asparagine 72, asparagine 154, asparagine 198, asparagine 212, and asparagine 326.

This sequence belongs to the glycosyltransferase 31 family. Mg(2+) is required as a cofactor.

The protein resides in the golgi apparatus membrane. The catalysed reaction is a globoside Gb3Cer (d18:1(4E)) + UDP-N-acetyl-alpha-D-galactosamine = a globoside Gb4Cer (d18:1(4E)) + UDP + H(+). Its pathway is protein modification; protein glycosylation. Its function is as follows. Transfers N-acetylgalactosamine onto globotriaosylceramide. Plays a critical role in preimplantation stage embryonic development. This is UDP-GalNAc:beta-1,3-N-acetylgalactosaminyltransferase 1 (B3GALNT1) from Sus scrofa (Pig).